A 538-amino-acid polypeptide reads, in one-letter code: Bifunctional purine biosynthesis protein PurH (538 aa).

In terms of domain architecture, MGS-like spans 6–158; the sequence is KHIPAPDLHR…KNHAYVATVV (153 aa).

Belongs to the PurH family.

It catalyses the reaction (6R)-10-formyltetrahydrofolate + 5-amino-1-(5-phospho-beta-D-ribosyl)imidazole-4-carboxamide = 5-formamido-1-(5-phospho-D-ribosyl)imidazole-4-carboxamide + (6S)-5,6,7,8-tetrahydrofolate. It carries out the reaction IMP + H2O = 5-formamido-1-(5-phospho-D-ribosyl)imidazole-4-carboxamide. The protein operates within purine metabolism; IMP biosynthesis via de novo pathway; 5-formamido-1-(5-phospho-D-ribosyl)imidazole-4-carboxamide from 5-amino-1-(5-phospho-D-ribosyl)imidazole-4-carboxamide (10-formyl THF route): step 1/1. It participates in purine metabolism; IMP biosynthesis via de novo pathway; IMP from 5-formamido-1-(5-phospho-D-ribosyl)imidazole-4-carboxamide: step 1/1. The sequence is that of Bifunctional purine biosynthesis protein PurH from Brucella ovis (strain ATCC 25840 / 63/290 / NCTC 10512).